The following is a 557-amino-acid chain: Probable protein kinase UbiB (557 aa).

Residues 121–509 (AFDTTPLASA…RKLQTRVVTA (389 aa)) enclose the Protein kinase domain. ATP contacts are provided by residues 127–135 (LASASIAQV) and K154. D289 (proton acceptor) is an active-site residue. Transmembrane regions (helical) follow at residues 506–526 (VVTAITGSGLLVVAAVLYGLH) and 535–555 (VPVWSWISGGAGSAALLIAWL).

The protein belongs to the ABC1 family. UbiB subfamily.

The protein resides in the cell inner membrane. The protein operates within cofactor biosynthesis; ubiquinone biosynthesis [regulation]. Is probably a protein kinase regulator of UbiI activity which is involved in aerobic coenzyme Q (ubiquinone) biosynthesis. This is Probable protein kinase UbiB from Xanthomonas campestris pv. campestris (strain B100).